Consider the following 231-residue polypeptide: Somatolactin (231 aa).

Residues 1–24 form the signal peptide; the sequence is MLMFTAIQRGVWVALLWPHLLTAS. 3 disulfide bridges follow: Cys-29-Cys-39, Cys-89-Cys-205, and Cys-222-Cys-230. Asn-35 and Asn-145 each carry an N-linked (GlcNAc...) asparagine glycan.

The protein belongs to the somatotropin/prolactin family. In terms of tissue distribution, pituitary gland.

It localises to the secreted. This chain is Somatolactin, found in Siganus guttatus (Orange-spotted spinefoot).